The sequence spans 471 residues: Cysteine--tRNA ligase (471 aa).

Cys-29 is a binding site for Zn(2+). The 'HIGH' region signature appears at 31-41 (PTVYNYIHIGN). Zn(2+) contacts are provided by Cys-209, His-234, and Glu-238. The 'KMSKS' region signature appears at 266–270 (KMSKS). ATP is bound at residue Lys-269.

Belongs to the class-I aminoacyl-tRNA synthetase family. As to quaternary structure, monomer. The cofactor is Zn(2+).

Its subcellular location is the cytoplasm. It carries out the reaction tRNA(Cys) + L-cysteine + ATP = L-cysteinyl-tRNA(Cys) + AMP + diphosphate. The protein is Cysteine--tRNA ligase of Listeria innocua serovar 6a (strain ATCC BAA-680 / CLIP 11262).